The sequence spans 228 residues: L-ribulose-5-phosphate 4-epimerase UlaF (228 aa).

Residues 26-27, 43-44, and 72-73 contribute to the substrate site; these read GN, SG, and SS. Residues aspartate 74, histidine 93, and histidine 95 each contribute to the Zn(2+) site. The active-site Proton donor/acceptor is aspartate 118. Residue histidine 167 coordinates Zn(2+). Tyrosine 225 (proton donor/acceptor) is an active-site residue.

This sequence belongs to the aldolase class II family. AraD/FucA subfamily. Requires Zn(2+) as cofactor.

It carries out the reaction L-ribulose 5-phosphate = D-xylulose 5-phosphate. It participates in cofactor degradation; L-ascorbate degradation; D-xylulose 5-phosphate from L-ascorbate: step 4/4. In terms of biological role, catalyzes the isomerization of L-ribulose 5-phosphate to D-xylulose 5-phosphate. Is involved in the anaerobic L-ascorbate utilization. In Escherichia coli (strain ATCC 8739 / DSM 1576 / NBRC 3972 / NCIMB 8545 / WDCM 00012 / Crooks), this protein is L-ribulose-5-phosphate 4-epimerase UlaF.